Here is a 352-residue protein sequence, read N- to C-terminus: Biotin synthase (352 aa).

Residues 44-262 (NRVQVSTLLS…LAVARIMMPK (219 aa)) form the Radical SAM core domain. [4Fe-4S] cluster contacts are provided by Cys59, Cys63, and Cys66. 4 residues coordinate [2Fe-2S] cluster: Cys103, Cys134, Cys194, and Arg266.

The protein belongs to the radical SAM superfamily. Biotin synthase family. As to quaternary structure, homodimer. [4Fe-4S] cluster serves as cofactor. Requires [2Fe-2S] cluster as cofactor.

It catalyses the reaction (4R,5S)-dethiobiotin + (sulfur carrier)-SH + 2 reduced [2Fe-2S]-[ferredoxin] + 2 S-adenosyl-L-methionine = (sulfur carrier)-H + biotin + 2 5'-deoxyadenosine + 2 L-methionine + 2 oxidized [2Fe-2S]-[ferredoxin]. It participates in cofactor biosynthesis; biotin biosynthesis; biotin from 7,8-diaminononanoate: step 2/2. Functionally, catalyzes the conversion of dethiobiotin (DTB) to biotin by the insertion of a sulfur atom into dethiobiotin via a radical-based mechanism. The polypeptide is Biotin synthase (Pseudomonas paraeruginosa (strain DSM 24068 / PA7) (Pseudomonas aeruginosa (strain PA7))).